Reading from the N-terminus, the 258-residue chain is NAD kinase (258 aa).

Catalysis depends on aspartate 44, which acts as the Proton acceptor. Residues aspartate 44–glycine 45, asparagine 116–glutamate 117, aspartate 146, alanine 154, and threonine 157–serine 162 each bind NAD(+).

Belongs to the NAD kinase family. A divalent metal cation is required as a cofactor.

The protein localises to the cytoplasm. It catalyses the reaction NAD(+) + ATP = ADP + NADP(+) + H(+). Involved in the regulation of the intracellular balance of NAD and NADP, and is a key enzyme in the biosynthesis of NADP. Catalyzes specifically the phosphorylation on 2'-hydroxyl of the adenosine moiety of NAD to yield NADP. The protein is NAD kinase of Zymomonas mobilis subsp. mobilis (strain ATCC 31821 / ZM4 / CP4).